Here is a 309-residue protein sequence, read N- to C-terminus: Ribonuclease Z (309 aa).

Positions 63, 65, 67, 68, 145, 216, and 274 each coordinate Zn(2+). Asp67 (proton acceptor) is an active-site residue.

Belongs to the RNase Z family. Homodimer. It depends on Zn(2+) as a cofactor.

It carries out the reaction Endonucleolytic cleavage of RNA, removing extra 3' nucleotides from tRNA precursor, generating 3' termini of tRNAs. A 3'-hydroxy group is left at the tRNA terminus and a 5'-phosphoryl group is left at the trailer molecule.. Its function is as follows. Zinc phosphodiesterase, which displays some tRNA 3'-processing endonuclease activity. Probably involved in tRNA maturation, by removing a 3'-trailer from precursor tRNA. In Streptococcus gordonii (strain Challis / ATCC 35105 / BCRC 15272 / CH1 / DL1 / V288), this protein is Ribonuclease Z.